The primary structure comprises 633 residues: Extracellular metalloproteinase 5 (633 aa).

The N-terminal stretch at 1–21 (MHGLLLAAAGLLSLPLHVVAH) is a signal peptide. A propeptide spanning residues 22–245 (PQPSTSLAGR…HNVVDYVSHA (224 aa)) is cleaved from the precursor. Residue asparagine 285 is glycosylated (N-linked (GlcNAc...) asparagine). Position 428 (histidine 428) interacts with Zn(2+). Glutamate 429 is a catalytic residue. Position 432 (histidine 432) interacts with Zn(2+). Residues asparagine 592 and asparagine 621 are each glycosylated (N-linked (GlcNAc...) asparagine).

This sequence belongs to the peptidase M36 family. It depends on Zn(2+) as a cofactor.

It localises to the secreted. In terms of biological role, secreted metalloproteinase probably acting as a virulence factor. In Trichophyton rubrum (Athlete's foot fungus), this protein is Extracellular metalloproteinase 5 (MEP5).